A 164-amino-acid polypeptide reads, in one-letter code: Large ribosomal subunit protein uL10 (164 aa).

The protein belongs to the universal ribosomal protein uL10 family. Part of the ribosomal stalk of the 50S ribosomal subunit. The N-terminus interacts with L11 and the large rRNA to form the base of the stalk. The C-terminus forms an elongated spine to which L12 dimers bind in a sequential fashion forming a multimeric L10(L12)X complex.

Functionally, forms part of the ribosomal stalk, playing a central role in the interaction of the ribosome with GTP-bound translation factors. The polypeptide is Large ribosomal subunit protein uL10 (Pseudoalteromonas translucida (strain TAC 125)).